We begin with the raw amino-acid sequence, 576 residues long: MAGUK p55 subfamily member 7 (576 aa).

2 L27 domains span residues 10 to 64 (CDMG…EKQN) and 65 to 122 (PLPI…YDPV). Residues 139-220 (IIRLVKNSEP…AITFKIIPST (82 aa)) form the PDZ domain. In terms of domain architecture, SH3 spans 228-298 (EGKIFIKALF…PSKHFQERRL (71 aa)). Residues 289 to 383 (PSKHFQERRL…VGPVGVGLNE (95 aa)) form a phospho-regulated basic and hydrophobic (PRBH) motif region. One can recognise a Guanylate kinase-like domain in the interval 368–560 (YRLIVLVGPV…AFNELKTTFD (193 aa)). The residue at position 409 (S409) is a Phosphoserine.

This sequence belongs to the MAGUK family. In terms of assembly, heterodimer; able to heterodimerize via its C-terminal L27 domain with LIN7A, LIN7B and LIN7C. Forms a tripartite complex composed of DLG1, MPP7 and LIN7 (LIN7A or LIN7C). Interacts with DLG1 via its N-terminal L27 domain. Interacts with PALS1 and PATJ. In terms of processing, phosphorylated by aPKC which promotes dissociation from the cell cortex.

The protein localises to the membrane. It is found in the lateral cell membrane. It localises to the cell junction. Its subcellular location is the tight junction. The protein resides in the adherens junction. The protein localises to the cytoplasm. It is found in the cell cortex. In terms of biological role, acts as an important adapter that promotes epithelial cell polarity and tight junction formation via its interaction with DLG1. Involved in the assembly of protein complexes at sites of cell-cell contact. The polypeptide is MAGUK p55 subfamily member 7 (Mpp7) (Mus musculus (Mouse)).